The primary structure comprises 122 residues: Mth938 domain-containing protein (122 aa).

Positions 6 to 122 (IASLSWGQMK…RVGGVFHSTC (117 aa)) are MTH138-like domain.

This sequence belongs to the AAMDC family.

It localises to the cytoplasm. In terms of biological role, may play a role in preadipocyte differentiation and adipogenesis. This chain is Mth938 domain-containing protein (AAMDC), found in Homo sapiens (Human).